The chain runs to 159 residues: Nucleotide-binding protein PSPTO_4393 (159 aa).

This sequence belongs to the YajQ family.

Nucleotide-binding protein. This Pseudomonas syringae pv. tomato (strain ATCC BAA-871 / DC3000) protein is Nucleotide-binding protein PSPTO_4393.